Reading from the N-terminus, the 199-residue chain is Probable GTP-binding protein EngB (199 aa).

The region spanning 22 to 196 (NFSEVAFLGR…EDVIINQTLG (175 aa)) is the EngB-type G domain. GTP contacts are provided by residues 30–37 (GRSNVGKS), 57–61 (GKTQL), 82–85 (DLPG), 152–155 (TKCD), and 175–177 (VSN). Mg(2+)-binding residues include Ser37 and Thr59.

This sequence belongs to the TRAFAC class TrmE-Era-EngA-EngB-Septin-like GTPase superfamily. EngB GTPase family. Mg(2+) is required as a cofactor.

Its function is as follows. Necessary for normal cell division and for the maintenance of normal septation. This is Probable GTP-binding protein EngB from Campylobacter jejuni subsp. doylei (strain ATCC BAA-1458 / RM4099 / 269.97).